Consider the following 154-residue polypeptide: Ribosome maturation factor RimP (154 aa).

This sequence belongs to the RimP family.

It localises to the cytoplasm. In terms of biological role, required for maturation of 30S ribosomal subunits. In Thioalkalivibrio sulfidiphilus (strain HL-EbGR7), this protein is Ribosome maturation factor RimP.